The primary structure comprises 669 residues: Thrombospondin-type laminin G domain and EAR repeat-containing protein (669 aa).

The first 19 residues, 1–19, serve as a signal peptide directing secretion; sequence MSALLSLCFVLPLAAPGHG. The Laminin G-like domain maps to 58-277; it reads GLQLSVAAPR…RVTLGPQPPC (220 aa). EAR repeat units follow at residues 313 to 358, 360 to 408, 412 to 460, 464 to 506, 514 to 570, 574 to 622, and 625 to 668; these read DYVE…KWTE, KFVS…KWSH, KFTP…KWNP, LFEA…VHSH, SFQL…ELNV, AFVK…RWQG, and GFVA…RLRT. N320 carries an N-linked (GlcNAc...) asparagine glycan. 4 N-linked (GlcNAc...) asparagine glycosylation sites follow: N468, N497, N556, and N569.

The protein localises to the secreted. It localises to the cell surface. The protein resides in the cell projection. Its subcellular location is the stereocilium. Its function is as follows. Plays a critical role in tooth and hair follicle morphogenesis through regulation of the Notch signaling pathway. May play a role in development or function of the auditory system. This is Thrombospondin-type laminin G domain and EAR repeat-containing protein (TSPEAR) from Homo sapiens (Human).